We begin with the raw amino-acid sequence, 544 residues long: Chaperonin GroEL (544 aa).

ATP is bound by residues 29–32 (TIGP), 86–90 (DGTTT), Gly413, 478–480 (NAA), and Asp494.

Belongs to the chaperonin (HSP60) family. As to quaternary structure, forms a cylinder of 14 subunits composed of two heptameric rings stacked back-to-back. Interacts with the co-chaperonin GroES.

Its subcellular location is the cytoplasm. The catalysed reaction is ATP + H2O + a folded polypeptide = ADP + phosphate + an unfolded polypeptide.. Its function is as follows. Together with its co-chaperonin GroES, plays an essential role in assisting protein folding. The GroEL-GroES system forms a nano-cage that allows encapsulation of the non-native substrate proteins and provides a physical environment optimized to promote and accelerate protein folding. The chain is Chaperonin GroEL from Exiguobacterium sp. (strain ATCC BAA-1283 / AT1b).